Here is a 156-residue protein sequence, read N- to C-terminus: Lipoprotein signal peptidase (156 aa).

3 helical membrane passes run 5–25, 64–84, and 89–109; these read FKFIFYFWGAFVLVFALDQWV, YLHLALIGVLFIYLFWQKTLL, and IAFGMMLGAGVSNLLDRFIYG. Active-site residues include D113 and D130. Residues 122-142 form a helical membrane-spanning segment; the sequence is NFAIFNVADVMINISVALILI.

Belongs to the peptidase A8 family.

The protein localises to the cell inner membrane. It catalyses the reaction Release of signal peptides from bacterial membrane prolipoproteins. Hydrolyzes -Xaa-Yaa-Zaa-|-(S,diacylglyceryl)Cys-, in which Xaa is hydrophobic (preferably Leu), and Yaa (Ala or Ser) and Zaa (Gly or Ala) have small, neutral side chains.. It functions in the pathway protein modification; lipoprotein biosynthesis (signal peptide cleavage). This protein specifically catalyzes the removal of signal peptides from prolipoproteins. This is Lipoprotein signal peptidase from Campylobacter jejuni subsp. doylei (strain ATCC BAA-1458 / RM4099 / 269.97).